The following is a 296-amino-acid chain: UDP-N-acetylenolpyruvoylglucosamine reductase (296 aa).

One can recognise an FAD-binding PCMH-type domain in the interval 19–203 (KVGGFAEYFS…LETTQKNLKK (185 aa)). Arg-166 is a catalytic residue. Residue Ser-217 is the Proton donor of the active site. The active site involves Glu-287.

It belongs to the MurB family. Requires FAD as cofactor.

It is found in the cytoplasm. It carries out the reaction UDP-N-acetyl-alpha-D-muramate + NADP(+) = UDP-N-acetyl-3-O-(1-carboxyvinyl)-alpha-D-glucosamine + NADPH + H(+). The protein operates within cell wall biogenesis; peptidoglycan biosynthesis. Cell wall formation. This chain is UDP-N-acetylenolpyruvoylglucosamine reductase, found in Prochlorococcus marinus subsp. pastoris (strain CCMP1986 / NIES-2087 / MED4).